The following is a 736-amino-acid chain: MAAVFDDIRLEDIPVDDVDMQDLEETYAVERSIEFDRYVVVDGAPVAPEAKVGALQKVLTKLFSQAGSVVDMDVPVEEGRTKGHLFIEFEDAGAARRAIKMFNGKKLDVKHRLWVNGLDDMERYGRPDFSTEYREPVVPEFEATEYPRSWLQDETGRDQFVLQKGEMTAVFWNRNNLQPENVVEPRRNWSNSILNFSPHGTYLFSFHDQGIASWGGPQFKRLRRFAHPDVKAISMSSTEKYLVTFSSEPLEVSDEPNEACPFGPESRGHQLCIWDVATGVCVKTFALPPQQQLQWPMVKWSFDDKFCARLGPGAIAVYETEKNFQLLGGKVMKIEDVQDFSFAPKGIKLASNRPNDPPSTVMVYWTPESNNQSCKAVLIELPNRRVLRTINLVQVTDVSFHWQNQAEFLCVQVDRHTKSRKTIFTNMEICSLTAREFPFEKVEIKDRCMRFAWEPNSDRFVIISRSENVNDNPAIAKNVVSFYAPEKKVDKKGVIIDKELSIFKKWKLVRAIDGKFSNEITWSPAGRFVCVAAIGKIGSRNENIDFYDMDYPNTEKIINTATDVNATLRDVAHINYASATDYEWDPSGRYLAFWSSAWKHKAENGYKVFNLAGAIVREELITDFNNFFWRPRPDSLLSNSEKKKVRKNLKEWSAHFEEQDAMEADSATRELILKRRNWLDEWSKYREACKQTLSESGLSICDCVELSTKDEDCELVEEIRETVVEESTEEVPFFEE.

Residues 1–94 (MAAVFDDIRL…LFIEFEDAGA (94 aa)) are sufficient for interaction with HCR1 and TIF32. Positions 1–219 (MAAVFDDIRL…GIASWGGPQF (219 aa)) are sufficient for interaction with PIC8. Positions 37-120 (RYVVVDGAPV…HRLWVNGLDD (84 aa)) constitute an RRM domain. WD repeat units lie at residues 140–182 (EFEA…PENV), 186–224 (RRNWSNSILNFSPHGTYLFSFHDQGIASWGGPQFKRLRR), 226–244 (AHPDVKAISMSSTEKYLVT), 245–284 (FSSEPLEVSDEPNEACPFGPESRGHQLCIWDVATGVCVKT), 288–328 (PPQQ…QLLG), 332–375 (MKIE…QSCK), 443–483 (EIKD…VSFY), 511–557 (AIDG…TEKI), 566–604 (ATLRDVAHINYASATDYEWDPSGRYLAFWSSAWKHKAEN), and 616–662 (VREE…QDAM).

The protein belongs to the eIF-3 subunit B family. In terms of assembly, component of the eukaryotic translation initiation factor 3 (eIF-3) complex.

It is found in the cytoplasm. Its function is as follows. RNA-binding component of the eukaryotic translation initiation factor 3 (eIF-3) complex, which is involved in protein synthesis of a specialized repertoire of mRNAs and, together with other initiation factors, stimulates binding of mRNA and methionyl-tRNAi to the 40S ribosome. The eIF-3 complex specifically targets and initiates translation of a subset of mRNAs involved in cell proliferation. The protein is Eukaryotic translation initiation factor 3 subunit B of Eremothecium gossypii (strain ATCC 10895 / CBS 109.51 / FGSC 9923 / NRRL Y-1056) (Yeast).